We begin with the raw amino-acid sequence, 123 residues long: Small ribosomal subunit protein uS12 (123 aa).

Asp-89 carries the post-translational modification 3-methylthioaspartic acid. The segment at 102–123 is disordered; that stretch reads LDTQGVKDRKQGRSKYGAKRPK. Over residues 113–123 the composition is skewed to basic residues; it reads GRSKYGAKRPK.

This sequence belongs to the universal ribosomal protein uS12 family. Part of the 30S ribosomal subunit. Contacts proteins S8 and S17. May interact with IF1 in the 30S initiation complex.

With S4 and S5 plays an important role in translational accuracy. Its function is as follows. Interacts with and stabilizes bases of the 16S rRNA that are involved in tRNA selection in the A site and with the mRNA backbone. Located at the interface of the 30S and 50S subunits, it traverses the body of the 30S subunit contacting proteins on the other side and probably holding the rRNA structure together. The combined cluster of proteins S8, S12 and S17 appears to hold together the shoulder and platform of the 30S subunit. In Magnetococcus marinus (strain ATCC BAA-1437 / JCM 17883 / MC-1), this protein is Small ribosomal subunit protein uS12.